The chain runs to 287 residues: X-box-binding protein 1 (287 aa).

The bZIP domain occupies 61–117 (EEKMDRRKLKNRVAAQNARDKKKERSAKIEDVMRDLVEENRRLRAENERLRRQNKNL). Residues 63–87 (KMDRRKLKNRVAAQNARDKKKERSA) form a disordered region. The tract at residues 63-88 (KMDRRKLKNRVAAQNARDKKKERSAK) is basic motif. Basic and acidic residues predominate over residues 78-87 (ARDKKKERSA). The interval 89–117 (IEDVMRDLVEENRRLRAENERLRRQNKNL) is leucine-zipper.

Interacts with SUMO-conjugating enzyme ubc-9; the interaction is direct. In terms of processing, sumoylated. Sumoylation may negatively modulate the transcription of genes involved in the ER-stress-response.

The protein localises to the nucleus. Required for transcriptional regulation of the unfolded protein response (UPR) in the endoplasmic reticulum (ER) under stressed conditions, acting downstream of ire-1, and also maintaining ER homeostasis via a negative feedback loop, in parallel with ER kinase pek-1. May also regulate Golgi protein trafficking distal to the ER. Protects the host organism from the detrimental effects of mounting an innate immune response to microbes, such as the Gram-negative bacterium P.aeruginosa, probably by modulating the UPR. In terms of biological role, plays a role in the unconventional cytoplasmic splicing processing of its own mRNA triggered by the endoplasmic reticulum (ER) transmembrane endoribonuclease ire-1: upon ER stress, the emerging xbp-1 polypeptide chain, as part of a mRNA-ribosome-nascent chain (R-RNC) complex, cotranslationally recruits its own unprocessed mRNA through transient docking to the ER membrane and translational pausing, therefore facilitating efficient ire-1-mediated xbp-1 mRNA isoform 2 production. Functionally, functions as a stress-inducible potent transcriptional activator during endoplasmic reticulum (ER) stress by inducing unfolded protein response (UPR) target genes via binding to the UPR element (UPRE). Plays a role in modulation of the UPR, lipid metabolism, proteostasis, and lifespan. In neurons, rescues stress resistance, increases longevity, and, drives expression of lysosomal genes in the intestine and activates the UPR in distal, non-neuronal cell types through a cell-nonautonomous mechanism. In neurons or intestine, plays a role in protection against proteotoxicity, acting via positive modulation of genes involved in lysosomal function, including lipases and the fatty-acid desaturase fat-6. Protection against proteotoxicity in neurons is dependent upon the transcription factor atf-6. The protein is X-box-binding protein 1 of Caenorhabditis elegans.